Here is a 953-residue protein sequence, read N- to C-terminus: GATA zinc finger domain-containing protein 14 (953 aa).

A compositionally biased stretch (polar residues) spans Met1 to Tyr21. 2 disordered regions span residues Met1–Arg109 and Thr216–Gln756. A compositionally biased stretch (low complexity) spans Asn22–Pro89. Positions Asn90 to Arg109 are enriched in polar residues. Low complexity-rich tracts occupy residues Ser219–Asn330, Asn342–Ser683, and Gly690–Gln756. A GATA-type zinc finger spans residues Cys893–Cys918. The segment at Lys934–Asn953 is disordered.

This chain is GATA zinc finger domain-containing protein 14 (gtaN), found in Dictyostelium discoideum (Social amoeba).